Consider the following 304-residue polypeptide: DnaJ homolog subfamily C member 17 (304 aa).

Positions 11–76 constitute a J domain; that stretch reads DLYALLGIEE…AARAAYDKVR (66 aa). A compositionally biased stretch (basic and acidic residues) spans 79–106; the sequence is KKQAAERTQKLDEKRKKVKLDLEARERQ. The interval 79 to 145 is disordered; sequence KKQAAERTQK…SRQLEEQQRL (67 aa). Position 112 is a phosphoserine (S112). Residues 118–145 show a composition bias toward basic and acidic residues; that stretch reads SRSTRTLEQEIERLREEGSRQLEEQQRL. One can recognise an RRM domain in the interval 178-249; the sequence is KCKKEDESKG…NPLKISWLEG (72 aa). An N6-methyllysine modification is found at K264.

It is found in the cytoplasm. The protein resides in the nucleus. Its function is as follows. May negatively affect PAX8-induced thyroglobulin/TG transcription. The sequence is that of DnaJ homolog subfamily C member 17 (DNAJC17) from Homo sapiens (Human).